The primary structure comprises 286 residues: Protease HtpX homolog (286 aa).

2 helical membrane-spanning segments follow: residues 7 to 27 and 29 to 49; these read TFMLMAAITALFIVIGGMIGG and SGMMLALLFALGMNFFSYWFS. Histidine 131 serves as a coordination point for Zn(2+). Residue glutamate 132 is part of the active site. Histidine 135 serves as a coordination point for Zn(2+). Transmembrane regions (helical) follow at residues 146–166 and 177–197; these read ISATMAGAISALANFAVFFGG and IAGIAVAILAPLAAAMIQMAI. Glutamate 202 serves as a coordination point for Zn(2+).

This sequence belongs to the peptidase M48B family. Requires Zn(2+) as cofactor.

Its subcellular location is the cell inner membrane. The polypeptide is Protease HtpX homolog (Ralstonia pickettii (strain 12J)).